We begin with the raw amino-acid sequence, 314 residues long: Cyclic di-GMP binding protein TDE_0214 (314 aa).

The region spanning 146 to 234 (QKRRNERVVI…KTVRTEPVEG (89 aa)) is the PilZ domain. Positions 288–300 (TPVSSPIGTNTAP) are enriched in polar residues. Residues 288-314 (TPVSSPIGTNTAPLTPPPADSAPEQIS) form a disordered region.

Its function is as follows. Cyclic-di-GMP binding protein that plays important roles in motility, chemotaxis, biofilm formation and virulence. The chain is Cyclic di-GMP binding protein TDE_0214 from Treponema denticola (strain ATCC 35405 / DSM 14222 / CIP 103919 / JCM 8153 / KCTC 15104).